We begin with the raw amino-acid sequence, 144 residues long: Large ribosomal subunit protein uL15 (144 aa).

The disordered stretch occupies residues 1 to 57 (MQLNDLRSAPGARREKHRPGRGIGSGLGKTGGRGHKGLTSRSGGKVAPGFEGGQQPL). The segment covering 21–31 (RGIGSGLGKTG) has biased composition (gly residues).

This sequence belongs to the universal ribosomal protein uL15 family. In terms of assembly, part of the 50S ribosomal subunit.

Functionally, binds to the 23S rRNA. The protein is Large ribosomal subunit protein uL15 of Pseudomonas aeruginosa (strain LESB58).